The following is a 353-amino-acid chain: Endophilin-A3 (353 aa).

Positions 1–21 (MSVAGLKKQFHKASQLFSEKI) are membrane-binding amphipathic helix. The region spanning 18-249 (SEKISGAEGT…LQNRINVASS (232 aa)) is the BAR domain. The required for dimerization upon membrane association stretch occupies residues 60–87 (PNPAYRAKLGMLNTMSKIRGQVKTTGYP). Residues 180-201 (DEEVKQAVEKFEESKELAERSM) adopt a coiled-coil conformation. Residues 218–254 (FVEAALDYHKQSTEILEDLQSKLQNRINVASSRPKRE) are interaction with ARC. An SH3 domain is found at 291–350 (VDQPCCQALYDFEPENEGELGFKEGDIITLTNQIDENWYEGMLNGESGFFPHNYVEVMVP).

The protein belongs to the endophilin family. In terms of assembly, interacts with ARC. Interacts with SYNJ1 and DNM1. As to expression, highest level in a region associated with endocytosis of yolk proteins in developing oocytes (at protein level). Highest level in small ovarian follicles. High levels in brain and testis. Lower level in adrenal glands.

The protein resides in the cytoplasm. Its subcellular location is the early endosome membrane. Functionally, implicated in endocytosis. May recruit other proteins to membranes with high curvature. Implicated in endocytosis of yolk proteins during oogenesis. This chain is Endophilin-A3, found in Gallus gallus (Chicken).